The sequence spans 265 residues: Taurine import ATP-binding protein TauB (265 aa).

The region spanning 7 to 236 (QNLNMIFKTP…MGIDGDLREI (230 aa)) is the ABC transporter domain. 41–48 (GPSGCGKT) is an ATP binding site.

This sequence belongs to the ABC transporter superfamily. Taurine importer (TC 3.A.1.17.1) family. The complex is composed of two ATP-binding proteins (TauB), two transmembrane proteins (TauC) and a solute-binding protein (TauA).

Its subcellular location is the cell inner membrane. The enzyme catalyses taurine(out) + ATP + H2O = taurine(in) + ADP + phosphate + H(+). In terms of biological role, part of the ABC transporter complex TauABC involved in taurine import. Responsible for energy coupling to the transport system. The chain is Taurine import ATP-binding protein TauB from Pelagibacter ubique (strain HTCC1062).